Consider the following 453-residue polypeptide: UDP-glycosyltransferase 79B3 (453 aa).

UDP-alpha-D-glucose contacts are provided by residues Ser-266, 325 to 327 (VQQ), 342 to 350 (HCGFGSMWE), and 364 to 367 (LGDQ).

Belongs to the UDP-glycosyltransferase family.

In Arabidopsis thaliana (Mouse-ear cress), this protein is UDP-glycosyltransferase 79B3 (UGT79B3).